A 54-amino-acid polypeptide reads, in one-letter code: Large ribosomal subunit protein bL33B (54 aa).

It belongs to the bacterial ribosomal protein bL33 family.

The protein is Large ribosomal subunit protein bL33B of Myxococcus xanthus (strain DK1622).